We begin with the raw amino-acid sequence, 205 residues long: Large ribosomal subunit protein uL3 (205 aa).

This sequence belongs to the universal ribosomal protein uL3 family. As to quaternary structure, part of the 50S ribosomal subunit. Forms a cluster with proteins L14 and L19.

Its function is as follows. One of the primary rRNA binding proteins, it binds directly near the 3'-end of the 23S rRNA, where it nucleates assembly of the 50S subunit. The protein is Large ribosomal subunit protein uL3 of Porphyromonas gingivalis (strain ATCC 33277 / DSM 20709 / CIP 103683 / JCM 12257 / NCTC 11834 / 2561).